We begin with the raw amino-acid sequence, 324 residues long: MAELEFEKPVVELRNKIRELKDYTKNSQMDFSEEIRILEDKLENLEEDIYGNLKVWDRVQIARHAERPTTLDYIEHLFTDFFECHGDRLFGDDAAIVGGIAKYKGMPVTVIGHQRGKDTKENIRRNFGMPHPEGYRKALRLMKQAEKFNRPIICFIDTKGAYPGKAAEERGQSEAIARNLFEMAGLTVPVICIVIGEGGSGGALGLGVGDYIHMLENSTYSVITPEGAAAILWKDAGKAKEAAEAMKITAADLKELGVIDEIIPEAKGGAHRNLSKQSENIDLMIRKTFEQLNGISKDELIEKRYEKYMKIGQVSFSNASIGIK.

The CoA carboxyltransferase C-terminal domain maps to 37–291 (ILEDKLENLE…DLMIRKTFEQ (255 aa)).

Belongs to the AccA family. Acetyl-CoA carboxylase is a heterohexamer composed of biotin carboxyl carrier protein (AccB), biotin carboxylase (AccC) and two subunits each of ACCase subunit alpha (AccA) and ACCase subunit beta (AccD).

Its subcellular location is the cytoplasm. The enzyme catalyses N(6)-carboxybiotinyl-L-lysyl-[protein] + acetyl-CoA = N(6)-biotinyl-L-lysyl-[protein] + malonyl-CoA. It functions in the pathway lipid metabolism; malonyl-CoA biosynthesis; malonyl-CoA from acetyl-CoA: step 1/1. In terms of biological role, component of the acetyl coenzyme A carboxylase (ACC) complex. First, biotin carboxylase catalyzes the carboxylation of biotin on its carrier protein (BCCP) and then the CO(2) group is transferred by the carboxyltransferase to acetyl-CoA to form malonyl-CoA. In Bacillus cereus (strain G9842), this protein is Acetyl-coenzyme A carboxylase carboxyl transferase subunit alpha.